The primary structure comprises 503 residues: Probable cytosol aminopeptidase (503 aa).

Lys274 and Asp279 together coordinate Mn(2+). Lys286 is an active-site residue. Positions 297, 356, and 358 each coordinate Mn(2+). Arg360 is a catalytic residue.

This sequence belongs to the peptidase M17 family. The cofactor is Mn(2+).

The protein resides in the cytoplasm. It carries out the reaction Release of an N-terminal amino acid, Xaa-|-Yaa-, in which Xaa is preferably Leu, but may be other amino acids including Pro although not Arg or Lys, and Yaa may be Pro. Amino acid amides and methyl esters are also readily hydrolyzed, but rates on arylamides are exceedingly low.. It catalyses the reaction Release of an N-terminal amino acid, preferentially leucine, but not glutamic or aspartic acids.. Functionally, presumably involved in the processing and regular turnover of intracellular proteins. Catalyzes the removal of unsubstituted N-terminal amino acids from various peptides. The chain is Probable cytosol aminopeptidase from Paraburkholderia phymatum (strain DSM 17167 / CIP 108236 / LMG 21445 / STM815) (Burkholderia phymatum).